The following is a 641-amino-acid chain: MDKTLSREEAKQLMQLLCLDMSCWGNLPLMRRQYLVKCKEYHPDKGGNEESMKLLNSLYLKLQDSVSSVHDLNEEEDNIWQSSQIPTYGTPDWDEWWSQFNTYWEEELRCNESMPSSPKRSAPEEEPSCSQATPPKKKHAFDASLEFPKELLEFVSHAVFSNKCITCFVVHTTREKGEVLYKKLLQKYQCSFISKHAFYNTVLIFFLTPHKHRVSAINNFCKGHCTVSFLFCKGVNNPYGLYSRMCRQPFNLCEENIPGGLKENEFNPEDLFGEPKEPSLSWNQIANFALEFDIDDVYYLLGSYIRFATKPEECEKCSKNDDATHKRVHVQNHENAVLLQESKSQKNACTQAIDRVIAERRYNCLTLTRKKLLTKRFKKLFNEMDKIVVGERKILLYMASIAWYTGLNKKIDELVVRFLKLIVDNKPKHRYWLFKGPINSGKTTLATALLNLCGGKALNINIPSEKLPFELGVALDQYMVVFEDVKGQIGIEKQLPSGNGVNNLDNLRDYLDGCVEVNLEKKHVNKRSQIFPPGIVTMNEYCIPETVAVRFEKTVMFTIKRNLRESLEKTPQLLSQRILHSGIAMLLLLIWYRPVSDFDEEIQSNVVYWKEVLDNYIGLTEFATMQMNVTNGKNILEKWFE.

N-acetylmethionine; by host is present on Met-1. The region spanning Gln-12–Trp-80 is the J domain. The short motif at Leu-108–Glu-112 is the LXCXE motif element. A disordered region spans residues Met-114 to Lys-136. Ser-117 is modified (phosphoserine; by host). A Phosphothreonine; by host modification is found at Thr-133. The short motif at Pro-134–Phe-141 is the Nuclear localization signal element. The T-ag OBD DNA-binding region spans Pro-148–Glu-263. The segment at Glu-277–Arg-369 adopts a T-ag D1-type zinc-finger fold. The Zn(2+) site is built by Cys-314, Cys-317, His-325, and His-329. Residues Lys-410–Gln-572 form the SF3 helicase domain. Gly-436 to Thr-443 serves as a coordination point for ATP.

In terms of assembly, forms homohexamers in the presence of ATP. Interacts with host HDAC1. Interacts (via LXCXE domain) with host RB1; the interaction induces the aberrant dissociation of RB1-E2F1 complex thereby disrupting RB1's activity. Interacts (via LXCXE domain) with host pRB-related proteins RBL1 and RBL2. Interacts (via C-terminus) with host TOP1 and POLA1 allowing DNA replication. Interacts with host TP53, inhibiting TP53 binding to DNA. Interacts with host preinitiation complex components TBP, TFIIA and TFIID to regulate transcription initiation. It depends on Mg(2+) as a cofactor. Phosphorylated on both serine and threonine residues. Small t antigen inhibits the dephosphorylation by the AC form of PP2A. Post-translationally, O-Glycosylated near the C-terminal region. In terms of processing, acetylated by CBP in a TP53-dependent manner.

The protein localises to the host nucleus. It carries out the reaction Couples ATP hydrolysis with the unwinding of duplex DNA by translocating in the 3'-5' direction.. It catalyses the reaction ATP + H2O = ADP + phosphate + H(+). Its function is as follows. Isoform large T antigen is a key early protein essential for both driving viral replication and inducing cellular transformation. Plays a role in viral genome replication by driving entry of quiescent cells into the cell cycle and by autoregulating the synthesis of viral early mRNA. Displays highly oncogenic activities by corrupting the host cellular checkpoint mechanisms that guard cell division and the transcription, replication, and repair of DNA. Participates in the modulation of cellular gene expression preceeding viral DNA replication. This step involves binding to host key cell cycle regulators retinoblastoma protein RB1/pRb and TP53. Induces the disassembly of host E2F1 transcription factors from RB1, thus promoting transcriptional activation of E2F1-regulated S-phase genes. Inhibits host TP53 binding to DNA, abrogating the ability of TP53 to stimulate gene expression. Plays the role of a TFIID-associated factor (TAF) in transcription initiation for all three RNA polymerases, by stabilizing the TBP-TFIIA complex on promoters. Initiates viral DNA replication and unwinding via interactions with the viral origin of replication. Binds two adjacent sites in the SV40 origin. The replication fork movement is facilitated by Large T antigen helicase activity. Has processive 3'-5' DNA helicase activity which requires a short 3' single-stranded region and ATP. Activates the transcription of viral late mRNA, through host TBP and TFIIA stabilization. Interferes with histone deacetylation mediated by HDAC1, leading to activation of transcription. This chain is Large T antigen, found in KI polyomavirus (isolate Stockholm 60) (KIPyV).